The sequence spans 451 residues: Proline--tRNA ligase (451 aa).

The protein belongs to the class-II aminoacyl-tRNA synthetase family. ProS type 2 subfamily. In terms of assembly, homodimer.

The protein localises to the cytoplasm. The catalysed reaction is tRNA(Pro) + L-proline + ATP = L-prolyl-tRNA(Pro) + AMP + diphosphate. Functionally, catalyzes the attachment of proline to tRNA(Pro) in a two-step reaction: proline is first activated by ATP to form Pro-AMP and then transferred to the acceptor end of tRNA(Pro). This Roseobacter denitrificans (strain ATCC 33942 / OCh 114) (Erythrobacter sp. (strain OCh 114)) protein is Proline--tRNA ligase.